Reading from the N-terminus, the 407-residue chain is MRQLLPGDTVWRNIRLATMDPQRQAPYGLVDSQALIVREGHICDIVPETQLPVSGDNIHDMQGRLVTPGLIDCHTHLVFAGNRAAEWEQRLNGASYQHISAQGGGINATVSATRACAEETLYLLARERMMRLASEGVTLLEIKSGYGLELATEEKLLRVAAKLAAENAIDISPTLLAAHATPAEYRDDPDGYITLVCETMIPQLWQKGLFDAVDLFCESVGFNVAQSERVLQTAKALGIPVKGHVEQLSLLGGAQLVSRYQGLSADHIEYLDEAGVAAMRDGGTVGVLLPGAFYFLRETQRPPVELLRRYQVPVAVASDFNPGTSPFCSLHLAMNMACVQFGLTPEEAWSGVTRHAARALGRQATHGQIRAGYRADFVVWDAEQPVEIVYEPGRNPLYQRVYRGQIS.

Positions 74 and 76 each coordinate Fe(3+). The Zn(2+) site is built by His74 and His76. The 4-imidazolone-5-propanoate site is built by Arg83, Tyr146, and His179. Residue Tyr146 coordinates N-formimidoyl-L-glutamate. His244 serves as a coordination point for Fe(3+). His244 contributes to the Zn(2+) binding site. Gln247 contributes to the 4-imidazolone-5-propanoate binding site. Asp319 contributes to the Fe(3+) binding site. Asp319 contributes to the Zn(2+) binding site. N-formimidoyl-L-glutamate-binding residues include Asn321 and Gly323. Thr324 is a binding site for 4-imidazolone-5-propanoate.

This sequence belongs to the metallo-dependent hydrolases superfamily. HutI family. Zn(2+) is required as a cofactor. It depends on Fe(3+) as a cofactor.

Its subcellular location is the cytoplasm. It carries out the reaction 4-imidazolone-5-propanoate + H2O = N-formimidoyl-L-glutamate. Its pathway is amino-acid degradation; L-histidine degradation into L-glutamate; N-formimidoyl-L-glutamate from L-histidine: step 3/3. In terms of biological role, catalyzes the hydrolytic cleavage of the carbon-nitrogen bond in imidazolone-5-propanoate to yield N-formimidoyl-L-glutamate. It is the third step in the universal histidine degradation pathway. The sequence is that of Imidazolonepropionase from Salmonella typhi.